Consider the following 291-residue polypeptide: MVRRFLKMHGLGNDFVVLDARRDPLPLTTAAARAIADRHTGVGCDQIVLLEPPRHPAADLFMRILNPDGSESGACGNATRCVASLVADGSGRAEVTVETATGLLRCRLRADGSVTVDMGPARLDWTQIPLAAAHDTLRVPAGAGPLQDACCVGMGNPHAVFFVDDAEAVDLATLGPVLEHHSLFPQRCNIEVAQVLAPDHIRMRVWERGAGITRACGSGSCATLVAAARRGLTGRAAWIELDGGRLWIEWHGDGHVLMTGPVATAFTGELSETLLPGSLPSETPLPETVPA.

Substrate is bound by residues Asn-13, Gln-46, and Asn-66. The active-site Proton donor is Cys-75. Substrate contacts are provided by residues 76-77 (GN), Asn-156, Asn-189, and 207-208 (ER). Cys-216 functions as the Proton acceptor in the catalytic mechanism. Residue 217-218 (GS) coordinates substrate.

This sequence belongs to the diaminopimelate epimerase family. Homodimer.

It localises to the cytoplasm. It carries out the reaction (2S,6S)-2,6-diaminopimelate = meso-2,6-diaminopimelate. It functions in the pathway amino-acid biosynthesis; L-lysine biosynthesis via DAP pathway; DL-2,6-diaminopimelate from LL-2,6-diaminopimelate: step 1/1. Catalyzes the stereoinversion of LL-2,6-diaminopimelate (L,L-DAP) to meso-diaminopimelate (meso-DAP), a precursor of L-lysine and an essential component of the bacterial peptidoglycan. The polypeptide is Diaminopimelate epimerase (Rhodospirillum centenum (strain ATCC 51521 / SW)).